Consider the following 1013-residue polypeptide: Ephrin type-A receptor 5 (1013 aa).

The signal sequence occupies residues methionine 1–alanine 31. Over serine 32–proline 549 the chain is Extracellular. Positions glutamate 36–arginine 214 constitute an Eph LBD domain. Residues asparagine 240, asparagine 275, asparagine 345, asparagine 399, asparagine 412, and asparagine 437 are each glycosylated (N-linked (GlcNAc...) asparagine). 2 Fibronectin type-III domains span residues proline 333–alanine 443 and alanine 444–valine 538. The chain crosses the membrane as a helical span at residues isoleucine 550–leucine 570. Over serine 571–leucine 1013 the chain is Cytoplasmic. Phosphotyrosine; by autocatalysis is present on residues tyrosine 626 and tyrosine 632. Residues isoleucine 651–isoleucine 912 form the Protein kinase domain. Residues isoleucine 657–valine 665 and lysine 683 each bind ATP. The Proton acceptor role is filled by aspartate 776. Residues tyrosine 809 and tyrosine 958 each carry the phosphotyrosine; by autocatalysis modification. The SAM domain maps to glycine 941–leucine 1013. The PDZ-binding signature appears at valine 1011–leucine 1013.

It belongs to the protein kinase superfamily. Tyr protein kinase family. Ephrin receptor subfamily. Heterotetramer upon binding of the ligand. The heterotetramer is composed of an ephrin dimer and a receptor dimer. Oligomerization is probably required to induce biological responses. In terms of processing, phosphorylated. Phosphorylation is stimulated by the ligand EFNA5. As to expression, detected in the 10-day embryonic brain, weaker expression in the rest of the 10-day embryo. Undetected in adult tissues.

It is found in the cell membrane. Its subcellular location is the cell projection. It localises to the axon. The protein resides in the dendrite. The enzyme catalyses L-tyrosyl-[protein] + ATP = O-phospho-L-tyrosyl-[protein] + ADP + H(+). Receptor tyrosine kinase which binds promiscuously GPI-anchored ephrin-A family ligands residing on adjacent cells, leading to contact-dependent bidirectional signaling into neighboring cells. The signaling pathway downstream of the receptor is referred to as forward signaling while the signaling pathway downstream of the ephrin ligand is referred to as reverse signaling. Among GPI-anchored ephrin-A ligands, EFNA5 most probably constitutes the cognate/functional ligand for EPHA5. Functions as an axon guidance molecule during development and may be involved in the development of the retinotectal, entorhino-hippocampal and hippocamposeptal pathways. Together with EFNA5 plays also a role in synaptic plasticity in adult brain through regulation of synaptogenesis. The chain is Ephrin type-A receptor 5 (EPHA5) from Gallus gallus (Chicken).